We begin with the raw amino-acid sequence, 22 residues long: Leptoglycin (22 aa).

A disordered region spans residues 1–22 (GLLGGLLGPLLGGGGGGGGGLL).

As to expression, expressed by the skin glands.

Its subcellular location is the secreted. In terms of biological role, antimicrobial protein. Has antibacterial activity against the Gram-negative bacteria E.coli ATCC 28922 (MIC=50 uM), P.aeruginosa ATCC 9027 (MIC=8 uM) and C.freundii ATCC 8090 (MIC=75 uM). Does not have hemolytic activity. The polypeptide is Leptoglycin (Leptodactylus pentadactylus (Smokey jungle frog)).